Reading from the N-terminus, the 359-residue chain is Phospho-N-acetylmuramoyl-pentapeptide-transferase (359 aa).

10 helical membrane passes run 27–47, 73–93, 94–114, 134–154, 166–186, 197–217, 233–253, 261–281, 286–306, and 336–356; these read IYALLTALVITIVLGPMMMRW, TMGGLLLGFGVLVSTLLWADL, TNIYVWLTMLVFAGFGLVGFV, LLGQLLVAGTAVGLLIMQPAY, FTPDLGWMYLPFALLVMIGAS, GLAIGPSITSATCYAFFIYIA, GVGEVTVFCGALVGAGLGFLW, LFMGDVGSLSIGGVLGFIAVL, LLLIIVGGVFVFETISVIMQV, and KIVIRFWVISILMALMALSTL.

Belongs to the glycosyltransferase 4 family. MraY subfamily. Mg(2+) serves as cofactor.

Its subcellular location is the cell inner membrane. It catalyses the reaction UDP-N-acetyl-alpha-D-muramoyl-L-alanyl-gamma-D-glutamyl-meso-2,6-diaminopimeloyl-D-alanyl-D-alanine + di-trans,octa-cis-undecaprenyl phosphate = di-trans,octa-cis-undecaprenyl diphospho-N-acetyl-alpha-D-muramoyl-L-alanyl-D-glutamyl-meso-2,6-diaminopimeloyl-D-alanyl-D-alanine + UMP. Its pathway is cell wall biogenesis; peptidoglycan biosynthesis. Functionally, catalyzes the initial step of the lipid cycle reactions in the biosynthesis of the cell wall peptidoglycan: transfers peptidoglycan precursor phospho-MurNAc-pentapeptide from UDP-MurNAc-pentapeptide onto the lipid carrier undecaprenyl phosphate, yielding undecaprenyl-pyrophosphoryl-MurNAc-pentapeptide, known as lipid I. In Maridesulfovibrio salexigens (strain ATCC 14822 / DSM 2638 / NCIMB 8403 / VKM B-1763) (Desulfovibrio salexigens), this protein is Phospho-N-acetylmuramoyl-pentapeptide-transferase.